A 1070-amino-acid chain; its full sequence is DNA-directed RNA polymerase subunit beta (1070 aa).

It belongs to the RNA polymerase beta chain family. As to quaternary structure, in plastids the minimal PEP RNA polymerase catalytic core is composed of four subunits: alpha, beta, beta', and beta''. When a (nuclear-encoded) sigma factor is associated with the core the holoenzyme is formed, which can initiate transcription.

It localises to the plastid. Its subcellular location is the chloroplast. The catalysed reaction is RNA(n) + a ribonucleoside 5'-triphosphate = RNA(n+1) + diphosphate. Functionally, DNA-dependent RNA polymerase catalyzes the transcription of DNA into RNA using the four ribonucleoside triphosphates as substrates. This is DNA-directed RNA polymerase subunit beta from Vitis vinifera (Grape).